Consider the following 269-residue polypeptide: Gene 51 glycoprotein (269 aa).

4 N-linked (GlcNAc...) asparagine; by host glycosylation sites follow: N53, N58, N74, and N78. Disordered stretches follow at residues 67 to 87 (LSTS…TTPY) and 103 to 137 (MLNS…ASKN). Positions 76-87 (TSNTSYSQTTPY) are enriched in low complexity. The segment covering 103 to 112 (MLNSTPNKPL) has biased composition (polar residues). The segment covering 113 to 136 (SSTKLTPKSQSSSQSTKTTKQASK) has biased composition (low complexity). N-linked (GlcNAc...) asparagine; by host glycans are attached at residues N137, N161, N170, and N191.

The polypeptide is Gene 51 glycoprotein (51) (Saimiriine herpesvirus 2 (strain 11) (SaHV-2)).